The chain runs to 391 residues: Nucleosome assembly protein 1-like 1 (391 aa).

A compositionally biased stretch (basic and acidic residues) spans 1-10 (MADIDNKEQS). The tract at residues 1–32 (MADIDNKEQSELDQDLEDVEEVEEEETGEETK) is disordered. A2 carries the post-translational modification N-acetylalanine. S10 is subject to Phosphoserine. Residues 11–28 (ELDQDLEDVEEVEEEETG) show a composition bias toward acidic residues. Residues T62 and T64 each carry the phosphothreonine modification. Phosphoserine is present on S69. The residue at position 116 (K116) is an N6-acetyllysine. Residues 125–150 (YEPTEEECEWKPDEEDEVSEELKEKA) carry the NAP1L motif motif. A compositionally biased stretch (acidic residues) spans 131–143 (ECEWKPDEEDEVS). The segment at 131–163 (ECEWKPDEEDEVSEELKEKAKIEDEKKDEEKED) is disordered. Residue S143 is modified to Phosphoserine. Residues 144-163 (EELKEKAKIEDEKKDEEKED) show a composition bias toward basic and acidic residues. Residues 273–279 (IKKKQKH) carry the Nuclear localization signal motif. Residues 346 to 376 (AIEDDDDDYDEEGEEADEEGEEEGDEENDPD) are compositionally biased toward acidic residues. The tract at residues 346–391 (AIEDDDDDYDEEGEEADEEGEEEGDEENDPDYDPKKDQNPAECKQQ) is disordered. 2 positions are modified to 5-glutamyl polyglycine: E359 and E360. Basic and acidic residues predominate over residues 377 to 391 (YDPKKDQNPAECKQQ). A Cysteine methyl ester modification is found at C388. C388 is lipidated: S-farnesyl cysteine. A propeptide spans 389–391 (KQQ) (removed in mature form).

The protein belongs to the nucleosome assembly protein (NAP) family. Homodimer. The dimer binds strongly and sequentially to single and double H2A-H2B heterodimers. Interacts with ERCC6; this interaction increases ERCC6 processivity. Interacts with RAD54. Interacts with SETD1A. In terms of processing, polyglycylated by TTLL10 on glutamate residues, resulting in polyglycine chains on the gamma-carboxyl group. Both polyglutamylation and polyglycylation modifications can coexist on the same protein on adjacent residues, and lowering polyglycylation levels increases polyglutamylation, and reciprocally. Polyglutamylated by TTLL4 on glutamate residues, resulting in polyglutamate chains on the gamma-carboxyl group. Both polyglutamylation and polyglycylation modifications can coexist on the same protein on adjacent residues, and lowering polyglycylation levels increases polyglutamylation, and reciprocally. In terms of tissue distribution, highly expressed in the brain (at protein level). High expression in cerebral cortex, not in cerebellar cortex.

The protein localises to the nucleus. It localises to the cytoplasm. Its subcellular location is the melanosome. Its function is as follows. Histone chaperone that plays a role in the nuclear import of H2A-H2B and nucleosome assembly. Also participates in several important DNA repair mechanisms: greatly enhances ERCC6-mediated chromatin remodeling which is essential for transcription-coupled nucleotide excision DNA repair. Also stimulates homologous recombination (HR) by RAD51 and RAD54 which is essential in mitotic DNA double strand break (DSB) repair. Plays a key role in the regulation of embryonic neurogenesis. Promotes the proliferation of neural progenitors and inhibits neuronal differentiation during cortical development. Regulates neurogenesis via the modulation of RASSF10; regulates RASSF10 expression by promoting SETD1A-mediated H3K4 methylation at the RASSF10 promoter. This chain is Nucleosome assembly protein 1-like 1 (Nap1l1), found in Mus musculus (Mouse).